The sequence spans 279 residues: Large ribosomal subunit protein uL2 (279 aa).

The segment at 224 to 279 (AMNPIDHPHGGGEGRTSGGRHPVTPWGKGTKGNRTRKSKASDKLIVRSRHAKKKGR) is disordered. A compositionally biased stretch (basic residues) spans 269 to 279 (VRSRHAKKKGR).

Belongs to the universal ribosomal protein uL2 family. As to quaternary structure, part of the 50S ribosomal subunit. Forms a bridge to the 30S subunit in the 70S ribosome.

In terms of biological role, one of the primary rRNA binding proteins. Required for association of the 30S and 50S subunits to form the 70S ribosome, for tRNA binding and peptide bond formation. It has been suggested to have peptidyltransferase activity; this is somewhat controversial. Makes several contacts with the 16S rRNA in the 70S ribosome. The polypeptide is Large ribosomal subunit protein uL2 (Cereibacter sphaeroides (strain ATCC 17025 / ATH 2.4.3) (Rhodobacter sphaeroides)).